Consider the following 1039-residue polypeptide: Error-prone DNA polymerase (1039 aa).

The protein belongs to the DNA polymerase type-C family. DnaE2 subfamily.

Its subcellular location is the cytoplasm. The catalysed reaction is DNA(n) + a 2'-deoxyribonucleoside 5'-triphosphate = DNA(n+1) + diphosphate. Its function is as follows. DNA polymerase involved in damage-induced mutagenesis and translesion synthesis (TLS). It is not the major replicative DNA polymerase. The protein is Error-prone DNA polymerase of Corynebacterium diphtheriae (strain ATCC 700971 / NCTC 13129 / Biotype gravis).